The chain runs to 216 residues: LexA repressor (216 aa).

Residues Arg-29–Lys-49 constitute a DNA-binding region (H-T-H motif). Active-site for autocatalytic cleavage activity residues include Ser-134 and Lys-171.

Belongs to the peptidase S24 family. Homodimer.

It catalyses the reaction Hydrolysis of Ala-|-Gly bond in repressor LexA.. In terms of biological role, represses a number of genes involved in the response to DNA damage (SOS response), including recA and lexA. In the presence of single-stranded DNA, RecA interacts with LexA causing an autocatalytic cleavage which disrupts the DNA-binding part of LexA, leading to derepression of the SOS regulon and eventually DNA repair. This Bordetella bronchiseptica (strain ATCC BAA-588 / NCTC 13252 / RB50) (Alcaligenes bronchisepticus) protein is LexA repressor.